Consider the following 184-residue polypeptide: UPF0149 protein PSPA7_5968 (184 aa).

The protein belongs to the UPF0149 family.

This is UPF0149 protein PSPA7_5968 from Pseudomonas paraeruginosa (strain DSM 24068 / PA7) (Pseudomonas aeruginosa (strain PA7)).